The sequence spans 447 residues: Glutamyl-tRNA reductase (447 aa).

Residues 49-52, S109, 114-116, and Q120 each bind substrate; these read TCNR and EQQ. C50 functions as the Nucleophile in the catalytic mechanism. 189 to 194 is a binding site for NADP(+); that stretch reads GAGSMG.

This sequence belongs to the glutamyl-tRNA reductase family. In terms of assembly, homodimer.

The catalysed reaction is (S)-4-amino-5-oxopentanoate + tRNA(Glu) + NADP(+) = L-glutamyl-tRNA(Glu) + NADPH + H(+). It functions in the pathway porphyrin-containing compound metabolism; protoporphyrin-IX biosynthesis; 5-aminolevulinate from L-glutamyl-tRNA(Glu): step 1/2. In terms of biological role, catalyzes the NADPH-dependent reduction of glutamyl-tRNA(Glu) to glutamate 1-semialdehyde (GSA). The protein is Glutamyl-tRNA reductase of Mycobacterium sp. (strain JLS).